A 260-amino-acid polypeptide reads, in one-letter code: UPF0246 protein Bphyt_1375 (260 aa).

Belongs to the UPF0246 family.

In Paraburkholderia phytofirmans (strain DSM 17436 / LMG 22146 / PsJN) (Burkholderia phytofirmans), this protein is UPF0246 protein Bphyt_1375.